Here is a 594-residue protein sequence, read N- to C-terminus: ATP-dependent RNA helicase DBP9 (594 aa).

The short motif at 15–43 is the Q motif element; the sequence is SSFDSFHLDSRLSQAIRSIGFKHPTLIQS. The 183-residue stretch at 47–229 folds into the Helicase ATP-binding domain; that stretch reads PLALQEKRDI…QQFCRSPAIL (183 aa). Residue 60 to 67 coordinates ATP; the sequence is ASTGSGKT. Residues 175–178 carry the DEAD box motif; it reads DEVD. Residues 242-474 form the Helicase C-terminal domain; that stretch reads KLIQYYVKVG…PYNFDIKQVE (233 aa). A disordered region spans residues 562–594; the sequence is PFHKNSHRKNGRVVKKKGNVQRKGKSDPLKSFK. Over residues 565–584 the composition is skewed to basic residues; the sequence is KNSHRKNGRVVKKKGNVQRK. Residues 585–594 show a composition bias toward basic and acidic residues; it reads GKSDPLKSFK.

The protein belongs to the DEAD box helicase family. DDX56/DBP9 subfamily.

The protein localises to the nucleus. It localises to the nucleolus. The catalysed reaction is ATP + H2O = ADP + phosphate + H(+). ATP-binding RNA helicase involved in the biogenesis of 60S ribosomal subunits and is required for the normal formation of 25S and 5.8S rRNAs. The protein is ATP-dependent RNA helicase DBP9 (DBP9) of Kluyveromyces lactis (strain ATCC 8585 / CBS 2359 / DSM 70799 / NBRC 1267 / NRRL Y-1140 / WM37) (Yeast).